The chain runs to 375 residues: Erythronate-4-phosphate dehydrogenase (375 aa).

Substrate-binding residues include Ser-45 and Thr-67. Asp-147 is a binding site for NAD(+). Arg-209 is an active-site residue. Asp-233 lines the NAD(+) pocket. The active site involves Glu-238. His-255 serves as the catalytic Proton donor. Gly-258 is a binding site for NAD(+). A substrate-binding site is contributed by Tyr-259.

Belongs to the D-isomer specific 2-hydroxyacid dehydrogenase family. PdxB subfamily. As to quaternary structure, homodimer.

It is found in the cytoplasm. The catalysed reaction is 4-phospho-D-erythronate + NAD(+) = (R)-3-hydroxy-2-oxo-4-phosphooxybutanoate + NADH + H(+). It functions in the pathway cofactor biosynthesis; pyridoxine 5'-phosphate biosynthesis; pyridoxine 5'-phosphate from D-erythrose 4-phosphate: step 2/5. Functionally, catalyzes the oxidation of erythronate-4-phosphate to 3-hydroxy-2-oxo-4-phosphonooxybutanoate. The protein is Erythronate-4-phosphate dehydrogenase of Shewanella amazonensis (strain ATCC BAA-1098 / SB2B).